Reading from the N-terminus, the 155-residue chain is Ribonuclease H (155 aa).

The RNase H type-1 domain occupies 9–150; sequence DGQQVEMWTD…ADALANQGVE (142 aa). 4 residues coordinate Mg(2+): aspartate 18, glutamate 56, aspartate 78, and aspartate 142.

This sequence belongs to the RNase H family. Monomer. Mg(2+) serves as cofactor.

It is found in the cytoplasm. It carries out the reaction Endonucleolytic cleavage to 5'-phosphomonoester.. Functionally, endonuclease that specifically degrades the RNA of RNA-DNA hybrids. The polypeptide is Ribonuclease H (Bordetella bronchiseptica (strain ATCC BAA-588 / NCTC 13252 / RB50) (Alcaligenes bronchisepticus)).